The sequence spans 165 residues: UPF0303 protein BceJ2315_15790 (165 aa).

Belongs to the UPF0303 family.

This Burkholderia cenocepacia (strain ATCC BAA-245 / DSM 16553 / LMG 16656 / NCTC 13227 / J2315 / CF5610) (Burkholderia cepacia (strain J2315)) protein is UPF0303 protein BceJ2315_15790.